A 174-amino-acid chain; its full sequence is Small ribosomal subunit protein uS4 (174 aa).

One can recognise an S4 RNA-binding domain in the interval 105–169 (RRLQTVAYRK…SPLADDLHPE (65 aa)).

The protein belongs to the universal ribosomal protein uS4 family. Part of the 30S ribosomal subunit. Contacts protein S5. The interaction surface between S4 and S5 is involved in control of translational fidelity.

In terms of biological role, one of the primary rRNA binding proteins, it binds directly to 16S rRNA where it nucleates assembly of the body of the 30S subunit. With S5 and S12 plays an important role in translational accuracy. The chain is Small ribosomal subunit protein uS4 from Natronomonas pharaonis (strain ATCC 35678 / DSM 2160 / CIP 103997 / JCM 8858 / NBRC 14720 / NCIMB 2260 / Gabara) (Halobacterium pharaonis).